A 738-amino-acid polypeptide reads, in one-letter code: Polyphosphate kinase (738 aa).

Residues 1 to 48 (MIGNDRWVTEIETGPVTEARPDTNAREPGDRTPAAPPAATPAATTDQL) are disordered. Over residues 19–30 (ARPDTNAREPGD) the composition is skewed to basic and acidic residues. Asn-91 provides a ligand contact to ATP. Arg-427 and Arg-457 together coordinate Mg(2+). Catalysis depends on His-487, which acts as the Phosphohistidine intermediate. ATP contacts are provided by Tyr-520, Arg-620, and His-648.

It belongs to the polyphosphate kinase 1 (PPK1) family. Requires Mg(2+) as cofactor. An intermediate of this reaction is the autophosphorylated ppk in which a phosphate is covalently linked to a histidine residue through a N-P bond.

It carries out the reaction [phosphate](n) + ATP = [phosphate](n+1) + ADP. Functionally, catalyzes the reversible transfer of the terminal phosphate of ATP to form a long-chain polyphosphate (polyP). The polypeptide is Polyphosphate kinase (Mycobacterium marinum (strain ATCC BAA-535 / M)).